A 90-amino-acid chain; its full sequence is Small ribosomal subunit protein bS18 (90 aa).

Belongs to the bacterial ribosomal protein bS18 family. In terms of assembly, part of the 30S ribosomal subunit. Forms a tight heterodimer with protein bS6.

Binds as a heterodimer with protein bS6 to the central domain of the 16S rRNA, where it helps stabilize the platform of the 30S subunit. The protein is Small ribosomal subunit protein bS18 of Bacteroides thetaiotaomicron (strain ATCC 29148 / DSM 2079 / JCM 5827 / CCUG 10774 / NCTC 10582 / VPI-5482 / E50).